The primary structure comprises 308 residues: uncharacterized protein (308 aa).

A signal peptide spans M1–A18.

This is an uncharacterized protein from Escherichia coli (strain K12).